The chain runs to 598 residues: Elongation factor 4 (598 aa).

One can recognise a tr-type G domain in the interval 4-185; the sequence is KNIRNFSIIA…TIITKIPAPK (182 aa). Residues 16–21 and 132–135 each bind GTP; these read DHGKST and NKID.

This sequence belongs to the TRAFAC class translation factor GTPase superfamily. Classic translation factor GTPase family. LepA subfamily.

The protein resides in the cell inner membrane. It carries out the reaction GTP + H2O = GDP + phosphate + H(+). In terms of biological role, required for accurate and efficient protein synthesis under certain stress conditions. May act as a fidelity factor of the translation reaction, by catalyzing a one-codon backward translocation of tRNAs on improperly translocated ribosomes. Back-translocation proceeds from a post-translocation (POST) complex to a pre-translocation (PRE) complex, thus giving elongation factor G a second chance to translocate the tRNAs correctly. Binds to ribosomes in a GTP-dependent manner. This Campylobacter jejuni subsp. jejuni serotype O:2 (strain ATCC 700819 / NCTC 11168) protein is Elongation factor 4.